Consider the following 245-residue polypeptide: Biosynthetic peptidoglycan transglycosylase (245 aa).

A helical membrane pass occupies residues 20–42; the sequence is VYAGSVFAGAWLATQLFYLAQIA.

The protein belongs to the glycosyltransferase 51 family.

It localises to the cell inner membrane. It catalyses the reaction [GlcNAc-(1-&gt;4)-Mur2Ac(oyl-L-Ala-gamma-D-Glu-L-Lys-D-Ala-D-Ala)](n)-di-trans,octa-cis-undecaprenyl diphosphate + beta-D-GlcNAc-(1-&gt;4)-Mur2Ac(oyl-L-Ala-gamma-D-Glu-L-Lys-D-Ala-D-Ala)-di-trans,octa-cis-undecaprenyl diphosphate = [GlcNAc-(1-&gt;4)-Mur2Ac(oyl-L-Ala-gamma-D-Glu-L-Lys-D-Ala-D-Ala)](n+1)-di-trans,octa-cis-undecaprenyl diphosphate + di-trans,octa-cis-undecaprenyl diphosphate + H(+). It functions in the pathway cell wall biogenesis; peptidoglycan biosynthesis. Functionally, peptidoglycan polymerase that catalyzes glycan chain elongation from lipid-linked precursors. The protein is Biosynthetic peptidoglycan transglycosylase of Burkholderia lata (strain ATCC 17760 / DSM 23089 / LMG 22485 / NCIMB 9086 / R18194 / 383).